We begin with the raw amino-acid sequence, 727 residues long: MAFQKVVKGTILMGGGALATVLGLSQFAHYRRKQVSLAYVEAATCFSEPVNREPPSREAQLMTLQNTSEFDILVIGGGATGCGCALDAVTRGLKTALVERNDFASGTSSRSTKLIHGGVRYLQKAITNLDVEQYRMVKEALHERANLLEIAPHLSAPLPIMLPLYKWWQLPYYWVGIKMYDLVAGSHCLKSSYVLSKSRALEHFPMLQKDKLVGAIVYYDGQHNDARMNLAIALTAARYGAATANYMEVVSLLKKTDPETGKERVSGARCKDVLTGHEFNVRAKCVINATGPFTDSVRKMDDNDVVPICQPSAGVHIVMPGYYSPENMGLLDPATSDGRVIFFLPWEKMTIAGTTDSPTDVTHHPIPSEDDINFILNEVRNYLSCDVEVRRGDVLAAWSGIRPLVTDPKSANTQSISRNHVVEVSDSGLITIAGGKWTTYRSMAEDTVNKAVKLHNLNAGPSRTVGLFLQGGKDWSPTLYIRLVQDYGLESEVAQHLAKTYGDKAFDVAKMASVTGKRWPVVGVRLVSEFPYIEAEVKYGIKEYACTAVDMISRRTRLAFLNVQAAEEALPKIVELMGRELNWSELRKQEELETATRFLYYEMGYKSRTEQLTDSTEISLLPPDIDRYKKRFHMFDEDEKGFITIVDVQRVLESINVQMDEDTLHEILCEVDLNKNGQVELHEFLQLMSAVHTGRVSGSRLAILMKTAEENLDRRVPIPVDRSCGGL.

The transit peptide at 1–42 (MAFQKVVKGTILMGGGALATVLGLSQFAHYRRKQVSLAYVEA) directs the protein to the mitochondrion. Residue 71-99 (DILVIGGGATGCGCALDAVTRGLKTALVE) participates in FAD binding. Tyr-601 carries the post-translational modification Phosphotyrosine. 2 EF-hand domains span residues 623–658 (PDIDRYKKRFHMFDEDEKGFITIVDVQRVLESINVQ) and 659–694 (MDEDTLHEILCEVDLNKNGQVELHEFLQLMSAVHTG). Positions 672, 674, 676, 678, and 683 each coordinate Ca(2+).

This sequence belongs to the FAD-dependent glycerol-3-phosphate dehydrogenase family. Requires FAD as cofactor.

It localises to the mitochondrion. The catalysed reaction is a quinone + sn-glycerol 3-phosphate = dihydroxyacetone phosphate + a quinol. The protein operates within polyol metabolism; glycerol degradation via glycerol kinase pathway; glycerone phosphate from sn-glycerol 3-phosphate (anaerobic route): step 1/1. With respect to regulation, calcium-binding enhance the activity of the enzyme. Its function is as follows. Calcium-responsive mitochondrial glycerol-3-phosphate dehydrogenase which seems to be a key component of the pancreatic beta-cell glucose-sensing device. The sequence is that of Glycerol-3-phosphate dehydrogenase, mitochondrial from Rattus norvegicus (Rat).